Here is a 534-residue protein sequence, read N- to C-terminus: Probable DNA polymerase epsilon subunit 2 (534 aa).

The protein belongs to the DNA polymerase epsilon subunit B family. Consists of four subunits.

It is found in the nucleus. In terms of biological role, accessory component of the DNA polymerase epsilon complex. Participates in DNA repair and in chromosomal DNA replication. The chain is Probable DNA polymerase epsilon subunit 2 (pole-2) from Caenorhabditis elegans.